We begin with the raw amino-acid sequence, 408 residues long: Serine/threonine transporter SstT (408 aa).

9 helical membrane passes run leucine 11–alanine 31, phenylalanine 43–leucine 63, isoleucine 82–methionine 102, alanine 141–leucine 161, isoleucine 192–glycine 212, leucine 216–valine 236, isoleucine 290–leucine 310, leucine 316–alanine 336, and valine 363–threonine 383.

Belongs to the dicarboxylate/amino acid:cation symporter (DAACS) (TC 2.A.23) family.

Its subcellular location is the cell inner membrane. It catalyses the reaction L-serine(in) + Na(+)(in) = L-serine(out) + Na(+)(out). The catalysed reaction is L-threonine(in) + Na(+)(in) = L-threonine(out) + Na(+)(out). Involved in the import of serine and threonine into the cell, with the concomitant import of sodium (symport system). This is Serine/threonine transporter SstT from Shewanella sp. (strain ANA-3).